Reading from the N-terminus, the 179-residue chain is Large ribosomal subunit protein uL10 (179 aa).

It belongs to the universal ribosomal protein uL10 family. In terms of assembly, part of the ribosomal stalk of the 50S ribosomal subunit. The N-terminus interacts with L11 and the large rRNA to form the base of the stalk. The C-terminus forms an elongated spine to which L12 dimers bind in a sequential fashion forming a multimeric L10(L12)X complex.

Forms part of the ribosomal stalk, playing a central role in the interaction of the ribosome with GTP-bound translation factors. The protein is Large ribosomal subunit protein uL10 of Polynucleobacter necessarius subsp. necessarius (strain STIR1).